The following is a 519-amino-acid chain: uncharacterized protein (519 aa).

11 helical membrane-spanning segments follow: residues 52-72 (IYFL…VRGS), 86-106 (LATY…SPIV), 119-139 (TWVV…SYNV), 156-176 (WSFL…GWSL), 199-219 (FFLS…NTFI), 231-251 (LSGY…LVCF), 313-333 (MLSL…VYTG), 343-363 (IWLK…ILVY), 374-394 (VFFP…IQFV), 408-430 (IGGT…PQYV), and 477-497 (TSIV…TPVV).

It is found in the membrane. This is an uncharacterized protein from Schizosaccharomyces pombe (strain 972 / ATCC 24843) (Fission yeast).